Reading from the N-terminus, the 70-residue chain is DNA-directed RNA polymerase subunit omega (70 aa).

Belongs to the RNA polymerase subunit omega family. As to quaternary structure, the RNAP catalytic core consists of 2 alpha, 1 beta, 1 beta' and 1 omega subunit. When a sigma factor is associated with the core the holoenzyme is formed, which can initiate transcription.

It carries out the reaction RNA(n) + a ribonucleoside 5'-triphosphate = RNA(n+1) + diphosphate. Promotes RNA polymerase assembly. Latches the N- and C-terminal regions of the beta' subunit thereby facilitating its interaction with the beta and alpha subunits. In Caldanaerobacter subterraneus subsp. tengcongensis (strain DSM 15242 / JCM 11007 / NBRC 100824 / MB4) (Thermoanaerobacter tengcongensis), this protein is DNA-directed RNA polymerase subunit omega.